Consider the following 552-residue polypeptide: HTH-type transcriptional regulator SgrR (552 aa).

Residues 1–116 form the HTH marR-type domain; it reads MPSARLQQQF…LVSHLGRSFR (116 aa). Residues 26-49 constitute a DNA-binding region (H-T-H motif); sequence LNELAALLSCSRRHMRTLLNTMQD. The tract at residues 163–492 is solute-binding; that stretch reads ELEADIAHHW…IDWQADAARW (330 aa).

Its function is as follows. Activates the small RNA gene sgrS under glucose-phosphate stress conditions as well as yfdZ. Represses its own transcription under both stress and non-stress conditions. Might act as a sensor of the intracellular accumulation of phosphoglucose by binding these molecules in its C-terminal solute-binding domain. The chain is HTH-type transcriptional regulator SgrR from Shigella dysenteriae serotype 1 (strain Sd197).